The following is a 357-amino-acid chain: Protein RecA (357 aa).

Residue 67–74 (GPESSGKT) participates in ATP binding.

The protein belongs to the RecA family.

The protein resides in the cytoplasm. Can catalyze the hydrolysis of ATP in the presence of single-stranded DNA, the ATP-dependent uptake of single-stranded DNA by duplex DNA, and the ATP-dependent hybridization of homologous single-stranded DNAs. It interacts with LexA causing its activation and leading to its autocatalytic cleavage. This is Protein RecA from Shewanella oneidensis (strain ATCC 700550 / JCM 31522 / CIP 106686 / LMG 19005 / NCIMB 14063 / MR-1).